Reading from the N-terminus, the 184-residue chain is MLGPPVNLPKWLEENSHLLKPPINNYCVYNDDFTVMIVGGPNARTDYHINQTPEWFYQYKGAMMLKVVDDGVFRDIIIREGDMFLLPGNTPHNPVRFADTVGVVLEQRRPEGSIDRMRWYCQNPDCTPGQVVHEASFHCTDLGTQIKAGVESFKTDESLRKCGKCGELADWCPKPGSILDPNKA.

Arg44 lines the O2 pocket. Fe cation-binding residues include His48, Glu54, and His92. Glu54 is a binding site for substrate. The substrate site is built by Arg96 and Glu106. Residues Cys121, Cys126, Cys162, and Cys165 each coordinate a divalent metal cation.

The protein belongs to the 3-HAO family. Requires Fe(2+) as cofactor.

It is found in the cytoplasm. The catalysed reaction is 3-hydroxyanthranilate + O2 = (2Z,4Z)-2-amino-3-carboxymuconate 6-semialdehyde. The protein operates within cofactor biosynthesis; NAD(+) biosynthesis; quinolinate from L-kynurenine: step 3/3. Functionally, catalyzes the oxidative ring opening of 3-hydroxyanthranilate to 2-amino-3-carboxymuconate semialdehyde, which spontaneously cyclizes to quinolinate. This is 3-hydroxyanthranilate 3,4-dioxygenase from Pyricularia oryzae (strain 70-15 / ATCC MYA-4617 / FGSC 8958) (Rice blast fungus).